The primary structure comprises 183 residues: Protein jagunal homolog 1-B (183 aa).

At 1-39 (MASRAGPRATGTDGSDYQHRERVASHYQMSVALKSEIKK) the chain is on the cytoplasmic side. The chain crosses the membrane as a helical span at residues 40–60 (LNIAHAVVWFLVAAQVLVSQL). Over 61–71 (NLVSHKVVASP) the chain is Lumenal. Residues 72 to 92 (YQWEYTYLLSIIPTVFSFMAL) form a helical membrane-spanning segment. The Cytoplasmic portion of the chain corresponds to 93 to 99 (PKNNISY). Residues 100–120 (LVISMISGGLFCIGPILYGGM) form a helical membrane-spanning segment. Residues 121–137 (EMFPVAQQLYRHGKAYR) lie on the Lumenal side of the membrane. A helical membrane pass occupies residues 138–158 (FIFGFSAVSIMYLVLIISVQV). The Cytoplasmic segment spans residues 159–183 (HGWQIYYSKKLLDAWFTNTQDKKKK).

It belongs to the jagunal family.

It is found in the endoplasmic reticulum membrane. In terms of biological role, endoplasmic reticulum transmembrane protein involved in vesicle-mediated transport, which is required for neutrophil function. This Danio rerio (Zebrafish) protein is Protein jagunal homolog 1-B (jagn1b).